A 557-amino-acid chain; its full sequence is Ribonuclease J 2 (557 aa).

The Zn(2+) site is built by His-76, His-78, His-144, and Glu-166. Position 366–370 (366–370 (HASSH)) interacts with substrate.

This sequence belongs to the metallo-beta-lactamase superfamily. RNA-metabolizing metallo-beta-lactamase-like family. Bacterial RNase J subfamily. Homodimer. Component of a possible RNA degradosome complex composed of cshA, eno, pfkA, pnp, rnjA, rnjB, rnpA and rny. Interacts specifically with RNase J1. Zn(2+) serves as cofactor.

Its subcellular location is the cytoplasm. Functionally, an RNase that has 5'-3' exonuclease and endonuclease activity, with the exonuclease activity probably being most important in vivo. Involved in maturation of 16S rRNA, rnpB (the RNA component of RNase P) maturation and degradation, and mRNA maturation and/or decay. This subunit probably plays a structural rather than enzymatic role as mutation of its putative active site gives no phenotype, and its deletion is partially complemented by inactive RNase J1. In Staphylococcus aureus (strain NCTC 8325 / PS 47), this protein is Ribonuclease J 2.